The primary structure comprises 188 residues: MATYSSNDFRPGLKIMFEGEPYAIESSEFVKPGKGQAFARVKMRRLLTGSRVEKTFKSTDSCEGADVVDTNMNYLYNDGEFYHFMHPETFEQHGVEEKTVSDAAKWLQDNAECIVTLWDGRPIAVQPPNFIEAEITDTDPGLKGDTAGTGGKPATLSTGAVVKVPLFVQIGEVVRVDTRSGEYVSRVK.

Residue lysine 34 is modified to N6-(3,6-diaminohexanoyl)-5-hydroxylysine.

This sequence belongs to the elongation factor P family. Post-translationally, may be beta-lysylated on the epsilon-amino group of Lys-34 by the combined action of EpmA and EpmB, and then hydroxylated on the C5 position of the same residue by EpmC (if this protein is present). Lysylation is critical for the stimulatory effect of EF-P on peptide-bond formation. The lysylation moiety may extend toward the peptidyltransferase center and stabilize the terminal 3-CCA end of the tRNA. Hydroxylation of the C5 position on Lys-34 may allow additional potential stabilizing hydrogen-bond interactions with the P-tRNA.

It is found in the cytoplasm. Its pathway is protein biosynthesis; polypeptide chain elongation. Functionally, involved in peptide bond synthesis. Alleviates ribosome stalling that occurs when 3 or more consecutive Pro residues or the sequence PPG is present in a protein, possibly by augmenting the peptidyl transferase activity of the ribosome. Modification of Lys-34 is required for alleviation. This Serratia proteamaculans (strain 568) protein is Elongation factor P.